We begin with the raw amino-acid sequence, 45 residues long: Photosystem II reaction center protein K (45 aa).

Residues 1–8 (MNSALFLA) constitute a propeptide that is removed on maturation. Residues 23–43 (ILPVIPVFFLLLAFVWQAAIG) form a helical membrane-spanning segment.

It belongs to the PsbK family. PSII is composed of 1 copy each of membrane proteins PsbA, PsbB, PsbC, PsbD, PsbE, PsbF, PsbH, PsbI, PsbJ, PsbK, PsbL, PsbM, PsbT, PsbX, PsbY, PsbZ, Psb30/Ycf12, at least 3 peripheral proteins of the oxygen-evolving complex and a large number of cofactors. It forms dimeric complexes.

The protein localises to the plastid. It localises to the chloroplast thylakoid membrane. One of the components of the core complex of photosystem II (PSII). PSII is a light-driven water:plastoquinone oxidoreductase that uses light energy to abstract electrons from H(2)O, generating O(2) and a proton gradient subsequently used for ATP formation. It consists of a core antenna complex that captures photons, and an electron transfer chain that converts photonic excitation into a charge separation. This is Photosystem II reaction center protein K from Pyropia yezoensis (Susabi-nori).